We begin with the raw amino-acid sequence, 223 residues long: Serine/threonine/tyrosine-interacting protein A (223 aa).

Residues 28 to 176 enclose the Tyrosine-protein phosphatase domain; it reads EMQEILPGLF…LQEYEAIYLA (149 aa).

Belongs to the protein-tyrosine phosphatase family. Non-receptor class subfamily.

Its function is as follows. Catalytically inactive phosphatase. This is Serine/threonine/tyrosine-interacting protein A (styx-a) from Xenopus laevis (African clawed frog).